We begin with the raw amino-acid sequence, 517 residues long: L-amino-acid oxidase (517 aa).

Residues 1–19 form the signal peptide; that stretch reads MNVFSIFSLVFLAAFGSCA. The cysteines at positions 29 and 192 are disulfide-linked. FAD is bound by residues 62 to 63, 82 to 83, arginine 90, and 106 to 109; these read MA, EA, and GPMR. Arginine 109 is a binding site for substrate. N-linked (GlcNAc...) asparagine glycosylation is present at asparagine 191. Residue valine 280 participates in FAD binding. Residues cysteine 350 and cysteine 431 are joined by a disulfide bond. Asparagine 380 carries an N-linked (GlcNAc...) asparagine glycan. A substrate-binding site is contributed by tyrosine 391. Residues glutamate 476 and 483 to 488 each bind FAD; that span reads GWLDST. Substrate is bound at residue 483–484; the sequence is GW.

It belongs to the flavin monoamine oxidase family. FIG1 subfamily. As to quaternary structure, monomer. This is in contrast with most of its orthologs, that are non-covalently linked homodimers. It depends on FAD as a cofactor. N-glycosylated. Expressed by the venom gland.

The protein localises to the secreted. It carries out the reaction an L-alpha-amino acid + O2 + H2O = a 2-oxocarboxylate + H2O2 + NH4(+). The enzyme catalyses L-leucine + O2 + H2O = 4-methyl-2-oxopentanoate + H2O2 + NH4(+). It catalyses the reaction L-phenylalanine + O2 + H2O = 3-phenylpyruvate + H2O2 + NH4(+). The catalysed reaction is L-tryptophan + O2 + H2O = indole-3-pyruvate + H2O2 + NH4(+). It carries out the reaction L-methionine + O2 + H2O = 4-methylsulfanyl-2-oxobutanoate + H2O2 + NH4(+). The enzyme catalyses L-isoleucine + O2 + H2O = (S)-3-methyl-2-oxopentanoate + H2O2 + NH4(+). It catalyses the reaction L-arginine + O2 + H2O = 5-guanidino-2-oxopentanoate + H2O2 + NH4(+). The catalysed reaction is L-aspartate + O2 + H2O = oxaloacetate + H2O2 + NH4(+). It carries out the reaction L-histidine + O2 + H2O = 3-(imidazol-5-yl)pyruvate + H2O2 + NH4(+). The enzyme catalyses L-asparagine + O2 + H2O = 2-oxosuccinamate + H2O2 + NH4(+). It catalyses the reaction L-tyrosine + O2 + H2O = 3-(4-hydroxyphenyl)pyruvate + H2O2 + NH4(+). The catalysed reaction is L-glutamine + O2 + H2O = 2-oxoglutaramate + H2O2 + NH4(+). It carries out the reaction L-alanine + O2 + H2O = pyruvate + H2O2 + NH4(+). The enzyme catalyses L-lysine + O2 + H2O = 6-amino-2-oxohexanoate + H2O2 + NH4(+). It catalyses the reaction L-glutamate + O2 + H2O = H2O2 + 2-oxoglutarate + NH4(+). Catalyzes an oxidative deamination of predominantly hydrophobic and aromatic L-amino acids, thus producing hydrogen peroxide that may contribute to the diverse toxic effects of this enzyme. Is highly active against L-Tyr, L-Asp, L-Phe, L-Glu, L-Trp, L-His, L-Gln, L-Ile, L-Met, L-Leu and moderately active against L-Lys, L-Arg, L-Ala and L-Asn. Exhibits diverse biological activities, such as edema, inflammatory cell infiltration, cytotoxicity and apoptosis, as well as induction of platelet aggregation. Effects of snake L-amino oxidases on platelets are controversial, since they either induce aggregation or inhibit agonist-induced aggregation. These different effects are probably due to different experimental conditions. This protein may also induce hemorrhage, hemolysis, and have antibacterial and antiparasitic activities. The polypeptide is L-amino-acid oxidase (Bungarus fasciatus (Banded krait)).